Here is an 869-residue protein sequence, read N- to C-terminus: Kinesin-like protein KIN-10A (869 aa).

The segment covering 1-36 (MAPTPSSSRSNQTQYTLIRTPQTKQRLNFHSKTPNP) has biased composition (polar residues). Positions 1-50 (MAPTPSSSRSNQTQYTLIRTPQTKQRLNFHSKTPNPDGSKDPSPPEHPVE) are disordered. Over residues 38–50 (GSKDPSPPEHPVE) the composition is skewed to basic and acidic residues. The Kinesin motor domain maps to 48–367 (PVEVIGRIRD…LEYGAKAKCI (320 aa)). An ATP-binding site is contributed by 129-136 (GPTGAGKS). The stretch at 393-515 (RIAAMDEFII…EIEVEFRRSN (123 aa)) forms a coiled coil.

The protein belongs to the TRAFAC class myosin-kinesin ATPase superfamily. Kinesin family. KIN-10 subfamily. As to quaternary structure, binds microtubules.

The protein resides in the cytoplasm. The protein localises to the cytoskeleton. Its subcellular location is the phragmoplast. Its function is as follows. Probable plus end-directed motor protein that may contribute to the transport of Golgi-derived vesicles in the phragmoplast. The sequence is that of Kinesin-like protein KIN-10A from Arabidopsis thaliana (Mouse-ear cress).